Here is a 54-residue protein sequence, read N- to C-terminus: Putative ATP synthase subunit epsilon, mitochondrial (54 aa).

It belongs to the eukaryotic ATPase epsilon family. As to quaternary structure, F-type ATPases have 2 components, CF(1) - the catalytic core - and CF(0) - the membrane proton channel. CF(1) has five subunits: alpha(3), beta(3), gamma(1), delta(1), epsilon(1). CF(0) seems to have nine subunits: a, b, c, d, e, f, g, F6 and 8 (or A6L).

It is found in the mitochondrion. The protein resides in the mitochondrion inner membrane. In terms of biological role, mitochondrial membrane ATP synthase (F(1)F(0) ATP synthase or Complex V) produces ATP from ADP in the presence of a proton gradient across the membrane which is generated by electron transport complexes of the respiratory chain. F-type ATPases consist of two structural domains, F(1) - containing the extramembraneous catalytic core, and F(0) - containing the membrane proton channel, linked together by a central stalk and a peripheral stalk. During catalysis, ATP synthesis in the catalytic domain of F(1) is coupled via a rotary mechanism of the central stalk subunits to proton translocation. Part of the complex F(1) domain and of the central stalk which is part of the complex rotary element. Rotation of the central stalk against the surrounding alpha(3)beta(3) subunits leads to hydrolysis of ATP in three separate catalytic sites on the beta subunits. In Caenorhabditis elegans, this protein is Putative ATP synthase subunit epsilon, mitochondrial.